Consider the following 463-residue polypeptide: V-type proton ATPase subunit S1 (463 aa).

The first 32 residues, 1-32, serve as a signal peptide directing secretion; it reads MMAATVVSRIRTGTRWAPVLWLLLSLVAVAAA. Positions 33–225 are excised as a propeptide; sequence VAAEQQVPLV…TAVRPSRVAR (193 aa). Over 33–412 the chain is Lumenal; it reads VAAEQQVPLV…EQFSYASDCA (380 aa). 8 N-linked (GlcNAc...) asparagine glycosylation sites follow: N164, N255, N267, N290, N297, N344, N351, and N399. A helical membrane pass occupies residues 413 to 433; sequence GFFSPGIWMGLLTTLFMLFIF. At 434 to 463 the chain is on the cytoplasmic side; that stretch reads TYGLHMILSLKTMDRFDDRKGPTITLTQIV.

The protein belongs to the vacuolar ATPase subunit S1 family. Accessory component of the multisubunit proton-transporting vacuolar (V)-ATPase protein pump. Interacts (via N-terminus) with ATP6AP2 (via N-terminus). Interacts with RNASEK. Interacts with TMEM106B (via C-terminus). Post-translationally, N-glycosylated. In terms of tissue distribution, expressed in brain (at protein level).

Its subcellular location is the endoplasmic reticulum membrane. The protein localises to the endoplasmic reticulum-Golgi intermediate compartment membrane. It localises to the cytoplasmic vesicle. The protein resides in the secretory vesicle. It is found in the synaptic vesicle membrane. Its subcellular location is the clathrin-coated vesicle membrane. Its function is as follows. Accessory subunit of the proton-transporting vacuolar (V)-ATPase protein pump, which is required for luminal acidification of secretory vesicles. Guides the V-type ATPase into specialized subcellular compartments, such as neuroendocrine regulated secretory vesicles or the ruffled border of the osteoclast, thereby regulating its activity. Involved in membrane trafficking and Ca(2+)-dependent membrane fusion. May play a role in the assembly of the V-type ATPase complex. In aerobic conditions, involved in intracellular iron homeostasis, thus triggering the activity of Fe(2+) prolyl hydroxylase (PHD) enzymes, and leading to HIF1A hydroxylation and subsequent proteasomal degradation. In islets of Langerhans cells, may regulate the acidification of dense-core secretory granules. The polypeptide is V-type proton ATPase subunit S1 (Atp6ap1) (Rattus norvegicus (Rat)).